Reading from the N-terminus, the 358-residue chain is Protein ocs (358 aa).

The protein belongs to the lysopine/nopaline/octopine/opine/vitopine dehydrogenases family. Monomer.

It catalyses the reaction D-octopine + NAD(+) + H2O = L-arginine + pyruvate + NADH + H(+). It carries out the reaction D-lysopine + NADP(+) + H2O = L-lysine + pyruvate + NADPH + H(+). Its function is as follows. Reductive condensation of pyruvate and arginine, lysine, histidine, or octopine to form octopine, lysopine, histopine, or octopinic acid, respectively. NADPH is the preferred cofactor, but NADH can also be used. The chain is Protein ocs (ocs) from Agrobacterium tumefaciens (strain Ach5).